We begin with the raw amino-acid sequence, 274 residues long: Probable ribosomal RNA small subunit methyltransferase A (274 aa).

6 residues coordinate S-adenosyl-L-methionine: H22, L24, G50, E71, D99, and N114.

The protein belongs to the class I-like SAM-binding methyltransferase superfamily. rRNA adenine N(6)-methyltransferase family. RsmA subfamily.

The protein localises to the cytoplasm. Functionally, specifically dimethylates two adjacent adenosines in the loop of a conserved hairpin near the 3'-end of 16S rRNA in the 30S particle. May play a critical role in biogenesis of 30S subunits. The polypeptide is Probable ribosomal RNA small subunit methyltransferase A (Natronomonas pharaonis (strain ATCC 35678 / DSM 2160 / CIP 103997 / JCM 8858 / NBRC 14720 / NCIMB 2260 / Gabara) (Halobacterium pharaonis)).